The sequence spans 436 residues: UDP-N-acetylmuramate--L-alanine ligase (436 aa).

Residue 108–114 (GAHGKTS) coordinates ATP.

Belongs to the MurCDEF family.

Its subcellular location is the cytoplasm. It catalyses the reaction UDP-N-acetyl-alpha-D-muramate + L-alanine + ATP = UDP-N-acetyl-alpha-D-muramoyl-L-alanine + ADP + phosphate + H(+). Its pathway is cell wall biogenesis; peptidoglycan biosynthesis. Functionally, cell wall formation. In Bacillus cereus (strain Q1), this protein is UDP-N-acetylmuramate--L-alanine ligase.